The following is a 930-amino-acid chain: MESMLNKLKSTVTKVTADVTSAVMGNPVTREFDVGRHIASGGNGLAWKIFNGTKKSTKQEVAVFVFDKKLIDKYQKFEKDQIIDSLKRGVQQLTRLRHPRLLTVQHPLEESRDCLAFCTEPVFASLANVLGNWENLPSSISPDIKDYKLYDVETKYGLLQVSEGLSFLHSSVKMVHGNVTPENVILNKSGAWKIMGFDFCVSSSNPSEQEPKFPCKEWDPNLPSLCLPNPEYLAPEYILSVSCETASDMYSLGAVMYAVFNQGRPIFEVNKQDIYKSFSRQLDQLSRLGSSSLTSIPEEVREHVKLLLNVTPTVRPDADQMTKIPFFDDVGAVTLQYFDTLFQRDNLQKSQFFKGLPKVLPKLPKRVIVQRILPCLTSEFVNPDMVPFVLPNVLLIAEECTKEEYIKLILPELGPVFKQQEPIQILLIFLQKMDLLLTKTPPDEIKNSVLPMVYRALEAPSIQIQELCLNIIPTFANLIDYPSMKNALIPRIKNACLQTSSLAVRVNSLVCLGKILEYLDKWFVLDDILPFLQQIPSKEPAVLMGILGIYKCTFTHKKLGITKEQLAGKVLPHLIPLSIENNLNLNQFSSFIAVIKEMLSRLESEHRTKLEQLHVMQEQQRSLDIGNQMSTSEETKVAHSGSQQIDKVFNNIGADLLSGSESENREDGMQGKQKRGSLTLEEKQKLAKEQEQAQKLKSQQPLKPQVHTPIAPIKQTKDLTDTLMENMSSLTSLSVSTPKISASSTFTPVPSTGLGMMFSTPIDNTKRNLTNGLNANMGFQTSGFSMPVNPNQNFFSGTGTAGVTTMSLGAPPTMSNFSPLTIPPASVKQPQQRPTDMSALNNLFGPQKPKVSMNQLSQQKPNQWLNQFAPPQGSPVMGSAAMGTQGNVMGQAAFGMQGNPFFNPQNFAQPPPTTMTSSSSASNDLKDLFG.

The Protein kinase domain maps to 32-327; that stretch reads FDVGRHIASG…ADQMTKIPFF (296 aa). The HEAT repeat unit spans residues 443-479; that stretch reads DEIKNSVLPMVYRALEAPSIQIQELCLNIIPTFANLI. A phosphoserine mark is found at Ser-658 and Ser-677. Residues 658 to 706 are disordered; that stretch reads SGSESENREDGMQGKQKRGSLTLEEKQKLAKEQEQAQKLKSQQPLKPQV. Over residues 680 to 694 the composition is skewed to basic and acidic residues; sequence LEEKQKLAKEQEQAQ. Residues 695-705 are compositionally biased toward low complexity; sequence KLKSQQPLKPQ. Phosphothreonine is present on Thr-708. Residues 895 to 930 are disordered; that stretch reads GMQGNPFFNPQNFAQPPPTTMTSSSSASNDLKDLFG. The span at 897–922 shows a compositional bias: low complexity; the sequence is QGNPFFNPQNFAQPPPTTMTSSSSAS.

This sequence belongs to the protein kinase superfamily. Interacts with clathrin and AP2B1; the interaction mediates the association with the AP-2 complex. Post-translationally, could autophosphorylate in presence of poly-L-lysine. In terms of tissue distribution, ubiquitously expressed.

Its subcellular location is the cytoplasmic vesicle. It localises to the clathrin-coated vesicle. The protein localises to the golgi apparatus. It is found in the trans-Golgi network membrane. The protein resides in the endosome membrane. Component of the AP2-containing clathrin coat that may regulate clathrin-dependent trafficking at plasma membrane, TGN and endosomal system. A possible serine/threonine-protein kinase toward the beta2-subunit of the plasma membrane adapter complex AP2 and other proteins in presence of poly-L-lysine has not been confirmed. By regulating the expression of excitatory receptors at synapses, plays an essential role in neuronal function and signaling and in brain development. This chain is SCY1-like protein 2, found in Mus musculus (Mouse).